Here is a 230-residue protein sequence, read N- to C-terminus: Large ribosomal subunit protein uL1c (230 aa).

The protein belongs to the universal ribosomal protein uL1 family. In terms of assembly, part of the 50S ribosomal subunit.

It is found in the plastid. It localises to the chloroplast. Binds directly to 23S rRNA. Might be involved in E site tRNA release (Potential). The chain is Large ribosomal subunit protein uL1c (rpl1) from Trieres chinensis (Marine centric diatom).